The following is a 502-amino-acid chain: ATP synthase subunit alpha (502 aa).

The interval 115–134 (IDGQGPINTTKTRPVEQKAT) is disordered. 169 to 176 (GDRQTGKT) provides a ligand contact to ATP.

The protein belongs to the ATPase alpha/beta chains family. In terms of assembly, F-type ATPases have 2 components, CF(1) - the catalytic core - and CF(0) - the membrane proton channel. CF(1) has five subunits: alpha(3), beta(3), gamma(1), delta(1), epsilon(1). CF(0) has three main subunits: a(1), b(2) and c(9-12). The alpha and beta chains form an alternating ring which encloses part of the gamma chain. CF(1) is attached to CF(0) by a central stalk formed by the gamma and epsilon chains, while a peripheral stalk is formed by the delta and b chains.

It localises to the cell membrane. It catalyses the reaction ATP + H2O + 4 H(+)(in) = ADP + phosphate + 5 H(+)(out). In terms of biological role, produces ATP from ADP in the presence of a proton gradient across the membrane. The alpha chain is a regulatory subunit. The protein is ATP synthase subunit alpha of Staphylococcus haemolyticus (strain JCSC1435).